The chain runs to 79 residues: Small ribosomal subunit protein bS18B (79 aa).

This sequence belongs to the bacterial ribosomal protein bS18 family. In terms of assembly, part of the 30S ribosomal subunit. Forms a tight heterodimer with protein bS6.

Its function is as follows. Binds as a heterodimer with protein bS6 to the central domain of the 16S rRNA, where it helps stabilize the platform of the 30S subunit. The chain is Small ribosomal subunit protein bS18B from Saccharopolyspora erythraea (strain ATCC 11635 / DSM 40517 / JCM 4748 / NBRC 13426 / NCIMB 8594 / NRRL 2338).